We begin with the raw amino-acid sequence, 267 residues long: Glutamate racemase (267 aa).

Substrate is bound by residues 9–10 (DS) and 41–42 (YS). C73 functions as the Proton donor/acceptor in the catalytic mechanism. Substrate is bound at residue 74–75 (NT). Catalysis depends on C184, which acts as the Proton donor/acceptor. Substrate is bound at residue 185-186 (TH).

This sequence belongs to the aspartate/glutamate racemases family.

It carries out the reaction L-glutamate = D-glutamate. It participates in cell wall biogenesis; peptidoglycan biosynthesis. Functionally, provides the (R)-glutamate required for cell wall biosynthesis. In Actinobacillus pleuropneumoniae serotype 7 (strain AP76), this protein is Glutamate racemase.